We begin with the raw amino-acid sequence, 96 residues long: UPF0235 protein Shewmr4_1190 (96 aa).

It belongs to the UPF0235 family.

This is UPF0235 protein Shewmr4_1190 from Shewanella sp. (strain MR-4).